The sequence spans 75 residues: UPF0291 protein LMOf2365_1322 (75 aa).

The tract at residues 56–75 is disordered; sequence DPNGTDVTPHKVKQLRKNKH. A compositionally biased stretch (basic residues) spans 65-75; it reads HKVKQLRKNKH.

This sequence belongs to the UPF0291 family.

It is found in the cytoplasm. The chain is UPF0291 protein LMOf2365_1322 from Listeria monocytogenes serotype 4b (strain F2365).